The sequence spans 362 residues: Histidinol-phosphate aminotransferase 1 (362 aa).

N6-(pyridoxal phosphate)lysine is present on lysine 226.

Belongs to the class-II pyridoxal-phosphate-dependent aminotransferase family. Histidinol-phosphate aminotransferase subfamily. Homodimer. Pyridoxal 5'-phosphate is required as a cofactor.

The catalysed reaction is L-histidinol phosphate + 2-oxoglutarate = 3-(imidazol-4-yl)-2-oxopropyl phosphate + L-glutamate. It functions in the pathway amino-acid biosynthesis; L-histidine biosynthesis; L-histidine from 5-phospho-alpha-D-ribose 1-diphosphate: step 7/9. In Dechloromonas aromatica (strain RCB), this protein is Histidinol-phosphate aminotransferase 1.